The primary structure comprises 118 residues: uncharacterized protein (118 aa).

To E.coli YeaO.

This is an uncharacterized protein from Mycobacterium bovis (strain ATCC BAA-935 / AF2122/97).